Consider the following 952-residue polypeptide: Germ layers disorganized gldi-3 (952 aa).

Residues 39 to 100 (KSFGRATTND…NGTYINDRRL (62 aa)) form the FHA domain. Disordered stretches follow at residues 174 to 220 (IGPR…MPST), 483 to 639 (GTPK…ESTV), and 652 to 866 (AAQS…KERC). Polar residues-rich tracts occupy residues 179 to 195 (PSTTNKVLQQEADSTNG) and 202 to 220 (NRASSASSATPEDTQMPST). Positions 523–537 (EESEILDVVGTDEPD) are enriched in acidic residues. Basic and acidic residues predominate over residues 553–568 (PEDHGRQTQNKIDKNV). Polar residues-rich tracts occupy residues 569-584 (RMSSTPRIDAQSTPSA) and 600-620 (VTSSKSAQDVSTPSTTPNPVS). The span at 662 to 679 (SVSNTTSSTSASLTTSSV) shows a compositional bias: low complexity. Residues 685–706 (TSSKENTDQKRAVDDSSDESAR) are compositionally biased toward basic and acidic residues. The span at 715-724 (SATPSSTPAE) shows a compositional bias: low complexity. Basic and acidic residues predominate over residues 725 to 742 (SSKRKQKDTSSRKMKQLD). The segment covering 761–772 (TKRRDKARRSTR) has biased composition (basic residues). Residues 789–800 (VEDEDETDDVQE) show a composition bias toward acidic residues. Basic and acidic residues-rich tracts occupy residues 823 to 832 (IKERKTKDKD) and 856 to 866 (PPKTEPSKERC).

Its subcellular location is the nucleus. Its function is as follows. Potential transcription factor that may play a role in the regulation of genes involved in cell cycle G1/S transition. May bind to regulatory elements of genes. The sequence is that of Germ layers disorganized gldi-3 from Caenorhabditis elegans.